The primary structure comprises 363 residues: Flagellar P-ring protein (363 aa).

Residues Met-1–Ala-21 form the signal peptide.

Belongs to the FlgI family. As to quaternary structure, the basal body constitutes a major portion of the flagellar organelle and consists of four rings (L,P,S, and M) mounted on a central rod.

It is found in the periplasm. Its subcellular location is the bacterial flagellum basal body. Functionally, assembles around the rod to form the L-ring and probably protects the motor/basal body from shearing forces during rotation. The protein is Flagellar P-ring protein of Colwellia psychrerythraea (strain 34H / ATCC BAA-681) (Vibrio psychroerythus).